Reading from the N-terminus, the 82-residue chain is Ubiquinol-cytochrome-c reductase complex assembly factor 3 (82 aa).

The Mitochondrial matrix segment spans residues M1–R6. The chain crosses the membrane as a helical span at residues I7–A29. The Mitochondrial intermembrane segment spans residues P30–S82.

It belongs to the UQCC3 family. Associates with the ubiquinol-cytochrome c reductase complex (mitochondrial respiratory chain complex III or cytochrome b-c1 complex).

It localises to the mitochondrion inner membrane. Required for the assembly of the ubiquinol-cytochrome c reductase complex (mitochondrial respiratory chain complex III or cytochrome b-c1 complex), mediating cytochrome b recruitment and probably stabilization within the complex. Thereby, plays an important role in ATP production by mitochondria. Cardiolipin-binding protein, it may also control the cardiolipin composition of mitochondria membranes and their morphology. This chain is Ubiquinol-cytochrome-c reductase complex assembly factor 3, found in Xenopus laevis (African clawed frog).